Reading from the N-terminus, the 590-residue chain is Beta-fructofuranosidase, insoluble isoenzyme CWINV2 (590 aa).

Positions 1-25 (MSAPKFGYVLLLIVLINISNNGVDA) are cleaved as a signal peptide. Residues 59 to 62 (WIND), Q78, and W86 contribute to the substrate site. D62 is a catalytic residue. An N-linked (GlcNAc...) asparagine glycan is attached at N118. A substrate-binding site is contributed by 121–122 (WS). Residues N143 and N180 are each glycosylated (N-linked (GlcNAc...) asparagine). Substrate is bound by residues 185–186 (RD), E241, and D275. N335 carries an N-linked (GlcNAc...) asparagine glycan. C435 and C483 are disulfide-bonded. N564 carries an N-linked (GlcNAc...) asparagine glycan.

The protein belongs to the glycosyl hydrolase 32 family. Expressed in flowers, and seeds.

The protein resides in the secreted. It is found in the extracellular space. Its subcellular location is the apoplast. It localises to the cell wall. The catalysed reaction is Hydrolysis of terminal non-reducing beta-D-fructofuranoside residues in beta-D-fructofuranosides.. The sequence is that of Beta-fructofuranosidase, insoluble isoenzyme CWINV2 (CWINV2) from Arabidopsis thaliana (Mouse-ear cress).